The chain runs to 350 residues: tRNA uridine(34) hydroxylase (350 aa).

Residues 146-240 form the Rhodanese domain; it reads DDPDAVFIDM…YARRAREQGL (95 aa). The active-site Cysteine persulfide intermediate is C200. Positions 319-328 are enriched in basic and acidic residues; sequence RRRRAGRENG. A disordered region spans residues 319-350; it reads RRRRAGRENGNKIFNKSRGRLNSKLSIPDPAE.

This sequence belongs to the TrhO family.

The catalysed reaction is uridine(34) in tRNA + AH2 + O2 = 5-hydroxyuridine(34) in tRNA + A + H2O. Catalyzes oxygen-dependent 5-hydroxyuridine (ho5U) modification at position 34 in tRNAs. This Salmonella heidelberg (strain SL476) protein is tRNA uridine(34) hydroxylase.